The following is a 1192-amino-acid chain: DNA topoisomerase 2 (1192 aa).

ATP is bound by residues asparagine 64, asparagine 95, and 142-149 (GTNGVGLK). The Mg(2+) site is built by glutamate 438, aspartate 539, and aspartate 541. Positions 707–1174 (IPNFLDGMTR…PGASVWLEEI (468 aa)) constitute a Topo IIA-type catalytic domain. Tyrosine 800 serves as the catalytic O-(5'-phospho-DNA)-tyrosine intermediate.

Belongs to the type II topoisomerase family. Requires Mg(2+) as cofactor. Mn(2+) is required as a cofactor. The cofactor is Ca(2+).

The protein localises to the host cytoplasm. The catalysed reaction is ATP-dependent breakage, passage and rejoining of double-stranded DNA.. Its function is as follows. Type II topoisomerase. Processively relaxes supercoiled DNA. Displays DNA-supercoiling activity only when associated with the viral histone-like protein. The protein is DNA topoisomerase 2 of Ornithodoros (relapsing fever ticks).